The primary structure comprises 370 residues: Queuine tRNA-ribosyltransferase (370 aa).

Residue Asp-89 is the Proton acceptor of the active site. Residues 89–93 (DSGGF), Asp-143, Gln-187, and Gly-214 contribute to the substrate site. The interval 245–251 (GVGKPED) is RNA binding. The Nucleophile role is filled by Asp-264. The interval 269 to 273 (TRNAR) is RNA binding; important for wobble base 34 recognition. Positions 302, 304, 307, and 333 each coordinate Zn(2+).

Belongs to the queuine tRNA-ribosyltransferase family. In terms of assembly, homodimer. Within each dimer, one monomer is responsible for RNA recognition and catalysis, while the other monomer binds to the replacement base PreQ1. The cofactor is Zn(2+).

The catalysed reaction is 7-aminomethyl-7-carbaguanine + guanosine(34) in tRNA = 7-aminomethyl-7-carbaguanosine(34) in tRNA + guanine. It participates in tRNA modification; tRNA-queuosine biosynthesis. Catalyzes the base-exchange of a guanine (G) residue with the queuine precursor 7-aminomethyl-7-deazaguanine (PreQ1) at position 34 (anticodon wobble position) in tRNAs with GU(N) anticodons (tRNA-Asp, -Asn, -His and -Tyr). Catalysis occurs through a double-displacement mechanism. The nucleophile active site attacks the C1' of nucleotide 34 to detach the guanine base from the RNA, forming a covalent enzyme-RNA intermediate. The proton acceptor active site deprotonates the incoming PreQ1, allowing a nucleophilic attack on the C1' of the ribose to form the product. After dissociation, two additional enzymatic reactions on the tRNA convert PreQ1 to queuine (Q), resulting in the hypermodified nucleoside queuosine (7-(((4,5-cis-dihydroxy-2-cyclopenten-1-yl)amino)methyl)-7-deazaguanosine). This Baumannia cicadellinicola subsp. Homalodisca coagulata protein is Queuine tRNA-ribosyltransferase.